A 221-amino-acid polypeptide reads, in one-letter code: MKVGAVIVAAGRGVRAGGGIPKQWRALHKGTVAQASIRAFTGHADIRDVVLVLHPDDIDTDLWPREPGLIVASGGASRSASVLAGLRMLNGKTDAVLIHDAARPCVTTRVIDDVISALRTAQAAAPAVAVVDALWTGENGQVTGTADRTGLYRAQTPQGFHLDAIIKAHRQFPEGAADDVEVARRAGLDVVIVPGDEDNLKITLPGDFARAEAILRARDGH.

It belongs to the IspD/TarI cytidylyltransferase family. IspD subfamily.

It catalyses the reaction 2-C-methyl-D-erythritol 4-phosphate + CTP + H(+) = 4-CDP-2-C-methyl-D-erythritol + diphosphate. It participates in isoprenoid biosynthesis; isopentenyl diphosphate biosynthesis via DXP pathway; isopentenyl diphosphate from 1-deoxy-D-xylulose 5-phosphate: step 2/6. In terms of biological role, catalyzes the formation of 4-diphosphocytidyl-2-C-methyl-D-erythritol from CTP and 2-C-methyl-D-erythritol 4-phosphate (MEP). This is 2-C-methyl-D-erythritol 4-phosphate cytidylyltransferase from Roseobacter denitrificans (strain ATCC 33942 / OCh 114) (Erythrobacter sp. (strain OCh 114)).